Consider the following 314-residue polypeptide: L-lactate dehydrogenase (314 aa).

Residues V17, D38, K43, Y69, and 83-84 (GA) each bind NAD(+). Residues Q86 and R92 each coordinate substrate. NAD(+) contacts are provided by residues S105, 122-124 (ASN), and S147. 124-127 (NPVD) serves as a coordination point for substrate. Residue 152–155 (DSAR) participates in substrate binding. Beta-D-fructose 1,6-bisphosphate contacts are provided by R157 and H172. H179 acts as the Proton acceptor in catalysis. Y223 is subject to Phosphotyrosine. T232 provides a ligand contact to substrate.

Belongs to the LDH/MDH superfamily. LDH family. As to quaternary structure, homotetramer.

Its subcellular location is the cytoplasm. The catalysed reaction is (S)-lactate + NAD(+) = pyruvate + NADH + H(+). It functions in the pathway fermentation; pyruvate fermentation to lactate; (S)-lactate from pyruvate: step 1/1. Its activity is regulated as follows. Allosterically activated by fructose 1,6-bisphosphate (FBP). In terms of biological role, catalyzes the conversion of lactate to pyruvate. This chain is L-lactate dehydrogenase, found in Corynebacterium glutamicum (strain R).